Consider the following 426-residue polypeptide: Serine--tRNA ligase (426 aa).

Residue threonine 233–glutamate 235 participates in L-serine binding. Arginine 264–glutamate 266 contributes to the ATP binding site. Glutamate 287 is a binding site for L-serine. Glutamate 351–serine 354 serves as a coordination point for ATP. Serine 387 provides a ligand contact to L-serine.

It belongs to the class-II aminoacyl-tRNA synthetase family. Type-1 seryl-tRNA synthetase subfamily. Homodimer. The tRNA molecule binds across the dimer.

The protein resides in the cytoplasm. It carries out the reaction tRNA(Ser) + L-serine + ATP = L-seryl-tRNA(Ser) + AMP + diphosphate + H(+). The enzyme catalyses tRNA(Sec) + L-serine + ATP = L-seryl-tRNA(Sec) + AMP + diphosphate + H(+). It participates in aminoacyl-tRNA biosynthesis; selenocysteinyl-tRNA(Sec) biosynthesis; L-seryl-tRNA(Sec) from L-serine and tRNA(Sec): step 1/1. Catalyzes the attachment of serine to tRNA(Ser). Is also able to aminoacylate tRNA(Sec) with serine, to form the misacylated tRNA L-seryl-tRNA(Sec), which will be further converted into selenocysteinyl-tRNA(Sec). In Francisella philomiragia subsp. philomiragia (strain ATCC 25017 / CCUG 19701 / FSC 153 / O#319-036), this protein is Serine--tRNA ligase.